The following is a 599-amino-acid chain: Translation initiation factor IF-2 (599 aa).

The 168-residue stretch at 111–278 (PRPPIITVMG…SILLLAEILE (168 aa)) folds into the tr-type G domain. The interval 120–127 (GHVDHGKT) is G1. 120–127 (GHVDHGKT) contacts GTP. The segment at 145–149 (GITQH) is G2. The tract at residues 166-169 (DTPG) is G3. GTP-binding positions include 166 to 170 (DTPGH) and 220 to 223 (NKMD). The G4 stretch occupies residues 220–223 (NKMD). Positions 256–258 (SAL) are G5.

Belongs to the TRAFAC class translation factor GTPase superfamily. Classic translation factor GTPase family. IF-2 subfamily.

It is found in the cytoplasm. In terms of biological role, one of the essential components for the initiation of protein synthesis. Protects formylmethionyl-tRNA from spontaneous hydrolysis and promotes its binding to the 30S ribosomal subunits. Also involved in the hydrolysis of GTP during the formation of the 70S ribosomal complex. This chain is Translation initiation factor IF-2, found in Mesomycoplasma hyopneumoniae (strain 7448) (Mycoplasma hyopneumoniae).